The primary structure comprises 132 residues: Small ribosomal subunit protein uS8 (132 aa).

Belongs to the universal ribosomal protein uS8 family. Part of the 30S ribosomal subunit. Contacts proteins S5 and S12.

One of the primary rRNA binding proteins, it binds directly to 16S rRNA central domain where it helps coordinate assembly of the platform of the 30S subunit. This Streptococcus suis (strain 98HAH33) protein is Small ribosomal subunit protein uS8.